Reading from the N-terminus, the 120-residue chain is Large ribosomal subunit protein bL20 (120 aa).

This sequence belongs to the bacterial ribosomal protein bL20 family.

Binds directly to 23S ribosomal RNA and is necessary for the in vitro assembly process of the 50S ribosomal subunit. It is not involved in the protein synthesizing functions of that subunit. The protein is Large ribosomal subunit protein bL20 of Blochmanniella pennsylvanica (strain BPEN).